The chain runs to 207 residues: ATP-dependent dethiobiotin synthetase BioD (207 aa).

D11–F16 contributes to the ATP binding site. Mg(2+) is bound at residue T15. K31 is an active-site residue. S35 provides a ligand contact to substrate. ATP contacts are provided by residues D42, E95 to G98, and N155 to Q156. Mg(2+) contacts are provided by D42 and E95.

This sequence belongs to the dethiobiotin synthetase family. Homodimer. The cofactor is Mg(2+).

It localises to the cytoplasm. It catalyses the reaction (7R,8S)-7,8-diammoniononanoate + CO2 + ATP = (4R,5S)-dethiobiotin + ADP + phosphate + 3 H(+). Its pathway is cofactor biosynthesis; biotin biosynthesis; biotin from 7,8-diaminononanoate: step 1/2. Catalyzes a mechanistically unusual reaction, the ATP-dependent insertion of CO2 between the N7 and N8 nitrogen atoms of 7,8-diaminopelargonic acid (DAPA, also called 7,8-diammoniononanoate) to form a ureido ring. The chain is ATP-dependent dethiobiotin synthetase BioD from Chlamydia abortus (strain DSM 27085 / S26/3) (Chlamydophila abortus).